Reading from the N-terminus, the 204-residue chain is Leucyl/phenylalanyl-tRNA--protein transferase (204 aa).

Belongs to the L/F-transferase family.

Its subcellular location is the cytoplasm. It catalyses the reaction N-terminal L-lysyl-[protein] + L-leucyl-tRNA(Leu) = N-terminal L-leucyl-L-lysyl-[protein] + tRNA(Leu) + H(+). The catalysed reaction is N-terminal L-arginyl-[protein] + L-leucyl-tRNA(Leu) = N-terminal L-leucyl-L-arginyl-[protein] + tRNA(Leu) + H(+). The enzyme catalyses L-phenylalanyl-tRNA(Phe) + an N-terminal L-alpha-aminoacyl-[protein] = an N-terminal L-phenylalanyl-L-alpha-aminoacyl-[protein] + tRNA(Phe). Its function is as follows. Functions in the N-end rule pathway of protein degradation where it conjugates Leu, Phe and, less efficiently, Met from aminoacyl-tRNAs to the N-termini of proteins containing an N-terminal arginine or lysine. The polypeptide is Leucyl/phenylalanyl-tRNA--protein transferase (Rhizobium leguminosarum bv. trifolii (strain WSM2304)).